A 620-amino-acid polypeptide reads, in one-letter code: MRRDVRILLLGEAQVGKTSLILSLVGEEFPEEVPARAEEITIPADVTPEKVPTHIVDYSEAEQTEEELQEEIHKANVVCVVYDVSEETTIEKIRTKWIPLVNGRTATGPRLPIILVGNKSDLRPGSTMEAVLPIMSQFPEIETCVECSAKHLRNISELFYYAQKAVLHPTAPLYDPEAKQLRPACAQALTRIFRLSDQDRDHGLSDEELNAFQKSCFGHPLAPQALEDVKRVVCKNVSGGVQNDRLTLEGFLFLNTLFIQRGRHETTWTILRRFGYSDSLELTPDYLYPALHVPPGCSTELNHRGYQFVQRMFEKHDQDHDGVLSPTELQNLFSVFSGAPWGPELLHTVPTQAGCLPLHGYLCQWTLMTYLDVQQCLAHLGYLGYPTLCEQDSQAQAITVTREKKLDQEKGQTQRSVLMCKVLGARGVGKSAFLQAFLGNSLGEARDPPEKFPLHTINTVRVNGQEKYLILCEVNADSLLDTSLDTTCDVACLMFDSSDPKTFVHCATIYKRYYMDGQTPCLFIASKADLPEGVAPPGLSPAEFCRRHRLPAPASFSCLGPAMPSTDVFTQLATMATFPHLVHTELHPTSFWLRGVLVAVGTAVAAVLSFSLYRVLVKSR.

The Cytoplasmic portion of the chain corresponds to 1–594 (MRRDVRILLL…ELHPTSFWLR (594 aa)). Residues 2–168 (RRDVRILLLG…FYYAQKAVLH (167 aa)) form the Miro 1 domain. Positions 16, 17, 18, and 19 each coordinate GTP. Thr-18 contributes to the Mg(2+) binding site. Asp-57 provides a ligand contact to Mg(2+). Ser-59 lines the GTP pocket. A Glycyl lysine isopeptide (Lys-Gly) (interchain with G-Cter in ubiquitin) cross-link involves residue Lys-96. The GTP site is built by Asn-118, Lys-119, Asp-121, Ala-149, and Lys-150. Residue Lys-119 forms a Glycyl lysine isopeptide (Lys-Gly) (interchain with G-Cter in ubiquitin) linkage. Lys-164 is covalently cross-linked (Glycyl lysine isopeptide (Lys-Gly) (interchain with G-Cter in ubiquitin)). EF-hand domains lie at 184–219 (ACAQALTRIFRLSDQDRDHGLSDEELNAFQKSCFGH) and 304–339 (RGYQFVQRMFEKHDQDHDGVLSPTELQNLFSVFSGA). 8 residues coordinate Ca(2+): Asp-197, Asp-199, Asp-201, Glu-208, Asp-317, Asp-319, Asp-321, and Glu-328. The 164-residue stretch at 415-578 (RSVLMCKVLG…FTQLATMATF (164 aa)) folds into the Miro 2 domain. GTP-binding residues include Gly-427, Gly-429, Lys-430, Ser-431, and Ala-432. Mg(2+) is bound at residue Ser-431. A Mg(2+)-binding site is contributed by Glu-473. GTP is bound by residues Lys-527, Asp-529, and Cys-558. Residues 595-617 (GVLVAVGTAVAAVLSFSLYRVLV) traverse the membrane as a helical; Anchor for type IV membrane protein segment. Residues 618–620 (KSR) are Mitochondrial intermembrane-facing.

Belongs to the mitochondrial Rho GTPase family. In terms of assembly, homodimer. Interacts with the kinesin-binding proteins TRAK1/OIP106 and TRAK2/GRIF1, forming a link between mitochondria and the trafficking apparatus of the microtubules. Interacts with ARMCX3. Found in a complex with KIF5B, OGT, RHOT1 and TRAK1. Post-translationally, ubiquitinated by PRKN in a PINK1-dependent manner, leading to its degradation. As to expression, ubiquitously expressed.

The protein localises to the mitochondrion outer membrane. The enzyme catalyses GTP + H2O = GDP + phosphate + H(+). The catalysed reaction is ATP + H2O = ADP + phosphate + H(+). It carries out the reaction UTP + H2O = UDP + phosphate + H(+). Functionally, atypical mitochondrial nucleoside-triphosphatase (NTPase) involved in mitochondrial trafficking. Probably involved in control of anterograde transport of mitochondria and their subcellular distribution. Can hydrolyze GTP, ATP and UTP. The polypeptide is Mitochondrial Rho GTPase 2 (Rhot2) (Mus musculus (Mouse)).